The primary structure comprises 86 residues: Acyl carrier protein (86 aa).

Residues 10 to 85 (DKIEQKVIEM…DVIKYIKERQ (76 aa)) form the Carrier domain. Position 45 is an O-(pantetheine 4'-phosphoryl)serine (Ser-45).

Belongs to the acyl carrier protein (ACP) family. Post-translationally, 4'-phosphopantetheine is transferred from CoA to a specific serine of apo-ACP by AcpS. This modification is essential for activity because fatty acids are bound in thioester linkage to the sulfhydryl of the prosthetic group.

The protein localises to the cytoplasm. The protein operates within lipid metabolism; fatty acid biosynthesis. In terms of biological role, carrier of the growing fatty acid chain in fatty acid biosynthesis. This is Acyl carrier protein from Rickettsia africae (strain ESF-5).